A 205-amino-acid chain; its full sequence is Molybdenum cofactor guanylyltransferase (205 aa).

GTP-binding positions include 14 to 16 (LAG), Lys-27, Asp-77, and Asp-107. A Mg(2+)-binding site is contributed by Asp-107.

It belongs to the MobA family. Monomer. It depends on Mg(2+) as a cofactor.

The protein resides in the cytoplasm. It catalyses the reaction Mo-molybdopterin + GTP + H(+) = Mo-molybdopterin guanine dinucleotide + diphosphate. Functionally, transfers a GMP moiety from GTP to Mo-molybdopterin (Mo-MPT) cofactor (Moco or molybdenum cofactor) to form Mo-molybdopterin guanine dinucleotide (Mo-MGD) cofactor. The sequence is that of Molybdenum cofactor guanylyltransferase from Burkholderia lata (strain ATCC 17760 / DSM 23089 / LMG 22485 / NCIMB 9086 / R18194 / 383).